The following is a 367-amino-acid chain: Aminomethyltransferase (367 aa).

This sequence belongs to the GcvT family. The glycine cleavage system is composed of four proteins: P, T, L and H.

It catalyses the reaction N(6)-[(R)-S(8)-aminomethyldihydrolipoyl]-L-lysyl-[protein] + (6S)-5,6,7,8-tetrahydrofolate = N(6)-[(R)-dihydrolipoyl]-L-lysyl-[protein] + (6R)-5,10-methylene-5,6,7,8-tetrahydrofolate + NH4(+). The glycine cleavage system catalyzes the degradation of glycine. In Shouchella clausii (strain KSM-K16) (Alkalihalobacillus clausii), this protein is Aminomethyltransferase.